Reading from the N-terminus, the 93-residue chain is MAVLTDEQVDAALPDLNGWERADGALRRSVKFSAFLDGIDAVRRVAEHAEAKDHHPDIDIRWRTVTFALVTHSEGGITDKDVQMARDIDGILG.

Belongs to the pterin-4-alpha-carbinolamine dehydratase family.

The catalysed reaction is (4aS,6R)-4a-hydroxy-L-erythro-5,6,7,8-tetrahydrobiopterin = (6R)-L-erythro-6,7-dihydrobiopterin + H2O. The protein is Putative pterin-4-alpha-carbinolamine dehydratase of Mycolicibacterium vanbaalenii (strain DSM 7251 / JCM 13017 / BCRC 16820 / KCTC 9966 / NRRL B-24157 / PYR-1) (Mycobacterium vanbaalenii).